The following is a 105-amino-acid chain: Flagellar transcriptional regulator FlhD (105 aa).

It belongs to the FlhD family. As to quaternary structure, homodimer; disulfide-linked. Forms a heterohexamer composed of two FlhC and four FlhD subunits. Each FlhC binds a FlhD dimer, forming a heterotrimer, and a hexamer assembles by dimerization of two heterotrimers.

The protein localises to the cytoplasm. Functions in complex with FlhC as a master transcriptional regulator that regulates transcription of several flagellar and non-flagellar operons by binding to their promoter region. Activates expression of class 2 flagellar genes, including fliA, which is a flagellum-specific sigma factor that turns on the class 3 genes. Also regulates genes whose products function in a variety of physiological pathways. The chain is Flagellar transcriptional regulator FlhD from Nitrosomonas eutropha (strain DSM 101675 / C91 / Nm57).